The primary structure comprises 500 residues: Cytochrome P450 11B2, mitochondrial (500 aa).

The N-terminal 24 residues, Met1–Leu24, are a transit peptide targeting the mitochondrion. Phe381 contributes to the 21-hydroxyprogesterone binding site. Cys447 provides a ligand contact to heme.

Belongs to the cytochrome P450 family. It depends on heme as a cofactor. Adrenal gland.

It is found in the mitochondrion inner membrane. It carries out the reaction a steroid + 2 reduced [adrenodoxin] + O2 + 2 H(+) = an 11beta-hydroxysteroid + 2 oxidized [adrenodoxin] + H2O. It catalyses the reaction 21-hydroxyprogesterone + 2 reduced [adrenodoxin] + O2 + 2 H(+) = corticosterone + 2 oxidized [adrenodoxin] + H2O. The enzyme catalyses corticosterone + 2 reduced [adrenodoxin] + O2 + 2 H(+) = 18-hydroxycorticosterone + 2 oxidized [adrenodoxin] + H2O. The catalysed reaction is 18-hydroxycorticosterone + 2 reduced [adrenodoxin] + O2 + 2 H(+) = aldosterone + 2 oxidized [adrenodoxin] + 2 H2O. It carries out the reaction 11-deoxycortisol + 2 reduced [adrenodoxin] + O2 + 2 H(+) = cortisol + 2 oxidized [adrenodoxin] + H2O. It catalyses the reaction 21-hydroxyprogesterone + 2 reduced [adrenodoxin] + O2 + 2 H(+) = 18-hydroxy-11-deoxycorticosterone + 2 oxidized [adrenodoxin] + H2O. The enzyme catalyses cortisol + 2 reduced [adrenodoxin] + O2 + 2 H(+) = 18-hydroxycortisol + 2 oxidized [adrenodoxin] + H2O. The catalysed reaction is 18-hydroxycortisol + 2 reduced [adrenodoxin] + O2 + 2 H(+) = 18-oxocortisol + 2 oxidized [adrenodoxin] + 2 H2O. It participates in steroid biosynthesis. Its function is as follows. A cytochrome P450 monooxygenase that catalyzes the biosynthesis of aldosterone, the main mineralocorticoid in the human body responsible for salt and water homeostasis, thus involved in blood pressure regulation, arterial hypertension, and the development of heart failure. Catalyzes three sequential oxidative reactions of 11-deoxycorticosterone (21-hydroxyprogesterone), namely 11-beta hydroxylation, followed by two successive oxidations at C18 yielding 18-hydroxy and then 18-oxo intermediates (that would not leave the enzyme active site during the consecutive hydroxylation reactions), ending with the formation of aldosterone. Can also produce 18-hydroxycortisol and 18-oxocortisol, derived from successive oxidations of cortisol at C18, normally found at very low levels, but significantly increased in primary aldosteronism, the most common form of secondary hypertension. Mechanistically, uses molecular oxygen inserting one oxygen atom into a substrate and reducing the second into a water molecule. Two electrons are provided by NADPH via a two-protein mitochondrial transfer system comprising flavoprotein FDXR (adrenodoxin/ferredoxin reductase) and nonheme iron-sulfur protein FDX1 or FDX2 (adrenodoxin/ferredoxin). Could also be involved in the androgen metabolic pathway. The chain is Cytochrome P450 11B2, mitochondrial (CYP11B2) from Mesocricetus auratus (Golden hamster).